A 109-amino-acid polypeptide reads, in one-letter code: Death-associated protein-like 1 homolog (109 aa).

Disordered regions lie at residues 1–51 (MVQL…KPRS) and 76–100 (FPET…ISRI). Residues 31–50 (KSADENANVEKETRKTDKPR) show a composition bias toward basic and acidic residues.

This sequence belongs to the DAP-DAPL1 family. As to quaternary structure, associates with ribosomes; preventing translation. Interacts with eiF5a (eif5a and eif5a2); preventing translation.

Functionally, ribosome-binding protein that promotes ribosome hibernation, a process during which ribosomes are stabilized in an inactive state and preserved from proteasomal degradation. Acts via its association with eiF5a (eif5a and eif5a2) at the polypeptide exit tunnel of the ribosome, preventing mRNA translation. Plays a key role in ribosome hibernation in the mature egg by preventing mRNA translation, leading to ribosome inactivation. Ribosomes, which are produced in large quantities during oogenesis, are stored and translationally repressed in the egg and early embryo. This Danio rerio (Zebrafish) protein is Death-associated protein-like 1 homolog.